A 512-amino-acid chain; its full sequence is 2,3-bisphosphoglycerate-independent phosphoglycerate mutase (512 aa).

Mn(2+) contacts are provided by Asp12 and Ser62. Residue Ser62 is the Phosphoserine intermediate of the active site. Substrate is bound by residues His123, 153–154 (RD), Arg185, Arg191, 260–263 (RPDR), and Lys333. Mn(2+) contacts are provided by Asp400, His404, Asp441, His442, and His460.

Belongs to the BPG-independent phosphoglycerate mutase family. In terms of assembly, monomer. The cofactor is Mn(2+).

It catalyses the reaction (2R)-2-phosphoglycerate = (2R)-3-phosphoglycerate. It functions in the pathway carbohydrate degradation; glycolysis; pyruvate from D-glyceraldehyde 3-phosphate: step 3/5. Functionally, catalyzes the interconversion of 2-phosphoglycerate and 3-phosphoglycerate. The sequence is that of 2,3-bisphosphoglycerate-independent phosphoglycerate mutase from Clostridium perfringens (strain 13 / Type A).